The primary structure comprises 96 residues: Large ribosomal subunit protein uL23 (96 aa).

It belongs to the universal ribosomal protein uL23 family. Part of the 50S ribosomal subunit. Contacts protein L29, and trigger factor when it is bound to the ribosome.

In terms of biological role, one of the early assembly proteins it binds 23S rRNA. One of the proteins that surrounds the polypeptide exit tunnel on the outside of the ribosome. Forms the main docking site for trigger factor binding to the ribosome. This is Large ribosomal subunit protein uL23 from Oleidesulfovibrio alaskensis (strain ATCC BAA-1058 / DSM 17464 / G20) (Desulfovibrio alaskensis).